The primary structure comprises 681 residues: T-box brain protein 1 (681 aa).

Disordered regions lie at residues 43 to 83 and 108 to 127; these read TDNL…RSKL and SQSSQPQSAATAPSAMFPYP. The segment covering 58–68 has biased composition (polar residues); the sequence is GMTNQSDTDNF. Over residues 108–122 the composition is skewed to low complexity; the sequence is SQSSQPQSAATAPSA. The T-box DNA-binding region spans 213 to 393; that stretch reads LWLKFHRHQT…HNPFAKGFRD (181 aa). T408 is subject to Phosphothreonine. S410 carries the phosphoserine modification. The disordered stretch occupies residues 447–483; the sequence is PGAGAGPGPGTDRSVPHTNGLLSPQQAEDPGAPSPQR. The span at 462–472 shows a compositional bias: polar residues; it reads PHTNGLLSPQQ. S594 carries the post-translational modification Phosphoserine. Residues 597-655 form a disordered region; sequence APAAEDAKPKDLSDSSWIETPSSIKSIDSSDSGIYEQAKRRRISPADTPVSESSSPLKS. A compositionally biased stretch (low complexity) spans 618–628; that stretch reads SSIKSIDSSDS. Position 640 is a phosphoserine (S640).

As to quaternary structure, homodimer. Part of a complex containing CASK, TBR1 and TSPYL2; may modulate gene expression in response to neuronal synaptic activity. Forms homodimers. Interacts with FOXP2. Interacts with FOXP1. Interacts with BCL11A. As to expression, expressed in the developing and adult cortex. Expressed in the olfactory bulbs.

The protein resides in the nucleus. Transcriptional repressor involved in multiple aspects of cortical development, including neuronal migration, laminar and areal identity, and axonal projection. As transcriptional repressor of FEZF2, it blocks the formation of the corticospinal (CS) tract from layer 6 projection neurons, thereby restricting the origin of CS axons specifically to layer 5 neurons. The polypeptide is T-box brain protein 1 (Tbr1) (Mus musculus (Mouse)).